A 314-amino-acid chain; its full sequence is Olfactory receptor 1 (314 aa).

At Met1–Ala29 the chain is on the extracellular side. Residue Asn5 is glycosylated (N-linked (GlcNAc...) asparagine). Residues Leu30–Leu50 form a helical membrane-spanning segment. At Leu51–Met59 the chain is on the cytoplasmic side. A helical transmembrane segment spans residues Tyr60–Leu81. The Extracellular portion of the chain corresponds to Leu82–Cys97. A disulfide bridge connects residues Cys97 and Cys179. The helical transmembrane segment at Leu98–Met118 threads the bilayer. Residues Ala119–Ser143 lie on the Cytoplasmic side of the membrane. The helical transmembrane segment at Leu144–Ala164 threads the bilayer. The Extracellular segment spans residues Arg165–Glu196. A helical transmembrane segment spans residues Val197–Ser217. At Tyr218–Thr240 the chain is on the cytoplasmic side. Residues Cys241–Cys261 traverse the membrane as a helical segment. The Extracellular portion of the chain corresponds to Pro262–Glu271. Asn265 and Asn266 each carry an N-linked (GlcNAc...) asparagine glycan. The chain crosses the membrane as a helical span at residues Thr272–Leu292. Residues Arg293 to Leu314 are Cytoplasmic-facing.

Belongs to the G-protein coupled receptor 1 family. As to expression, olfactory epithelium.

The protein resides in the cell membrane. Odorant receptor. Activated by a lily-derived aldehyde as well as other odorants. May signal through an inositol 1,4,5-trisphosphate (IP3) second messenger system. The sequence is that of Olfactory receptor 1 from Rattus norvegicus (Rat).